The primary structure comprises 330 residues: Aspartate--ammonia ligase (330 aa).

The protein belongs to the class-II aminoacyl-tRNA synthetase family. AsnA subfamily.

It is found in the cytoplasm. It catalyses the reaction L-aspartate + NH4(+) + ATP = L-asparagine + AMP + diphosphate + H(+). It functions in the pathway amino-acid biosynthesis; L-asparagine biosynthesis; L-asparagine from L-aspartate (ammonia route): step 1/1. In Streptococcus thermophilus (strain CNRZ 1066), this protein is Aspartate--ammonia ligase.